Consider the following 507-residue polypeptide: ATP synthase subunit alpha, chloroplastic (507 aa).

170 to 177 (GDRQTGKT) serves as a coordination point for ATP.

This sequence belongs to the ATPase alpha/beta chains family. F-type ATPases have 2 components, CF(1) - the catalytic core - and CF(0) - the membrane proton channel. CF(1) has five subunits: alpha(3), beta(3), gamma(1), delta(1), epsilon(1). CF(0) has four main subunits: a, b, b' and c.

Its subcellular location is the plastid. It is found in the chloroplast thylakoid membrane. The catalysed reaction is ATP + H2O + 4 H(+)(in) = ADP + phosphate + 5 H(+)(out). In terms of biological role, produces ATP from ADP in the presence of a proton gradient across the membrane. The alpha chain is a regulatory subunit. This Buxus microphylla (Littleleaf boxwood) protein is ATP synthase subunit alpha, chloroplastic.